Reading from the N-terminus, the 594-residue chain is Phostensin (594 aa).

2 stretches are compositionally biased toward basic and acidic residues: residues 18–33 (EEAAVRGREKAERDRL) and 109–125 (VLGDRKAGPLEVLERRS). Disordered stretches follow at residues 18-238 (EEAA…PTDV) and 294-485 (VQDI…GKKR). A phosphoserine mark is found at S126, S134, S174, and S194. 2 stretches are compositionally biased toward basic and acidic residues: residues 133–155 (QSPKGRESREERLSPRESRDRRL) and 167–190 (SLRDWRQSPAEARDLSSRPAEAQK). Residue T198 is modified to Phosphothreonine. At S224 the chain carries Phosphoserine. Residues 353-364 (EAEEEAEKEEAE) show a composition bias toward acidic residues. A compositionally biased stretch (pro residues) spans 403 to 421 (PRPPTPAPLSPPPSAPTAP). Residue S412 is modified to Phosphoserine. Position 437 is an N6-acetyllysine (K437). S510 is subject to Phosphoserine. A disordered region spans residues 531-577 (YQYPSESSVLEDLGPEPETPIAPLATQPDEEEEEEEEEEELLLQPGL). Over residues 558-571 (PDEEEEEEEEEEEL) the composition is skewed to acidic residues.

Interacts with Protein phosphatase 1 (PP1).

It is found in the cytoplasm. The protein localises to the cytoskeleton. May target protein phosphatase 1 to F-actin cytoskeleton. The polypeptide is Phostensin (Ppp1r18) (Mus musculus (Mouse)).